The following is a 1802-amino-acid chain: Bromodomain and WD repeat-containing protein 3 (1802 aa).

WD repeat units lie at residues 170–209, 213–251, 255–297, 307–347, 353–393, 400–452, 456–495, and 502–542; these read IKMH…IWAT, RLLA…VWCL, APVA…FWQW, RPVK…IYYL, EKIA…IWQY, SIVL…VWNS, QLLH…IWDL, and RNYF…LFGF. 2 positions are modified to phosphoserine: Ser-693 and Ser-703. The disordered stretch occupies residues 768–910; sequence KPSYTTQRND…PKQTRKKKGG (143 aa). Basic residues predominate over residues 785-795; it reads SLRRTQRKRQH. Residues 796-817 show a composition bias toward polar residues; that stretch reads TYQTRSNIEHNSQASCQNSGVQ. Acidic residues predominate over residues 818-829; sequence EDSDSSSEEDET. Residues 846–859 are compositionally biased toward low complexity; it reads SESSSSDSSSEYSD. 2 positions are modified to phosphoserine: Ser-885 and Ser-886. Residues 889 to 898 show a composition bias toward basic and acidic residues; sequence ENLKSLEERQ. The segment covering 899–909 has biased composition (basic residues); sequence KKPKQTRKKKG. Residues 1138-1245 enclose the Bromo 1 domain; the sequence is WGAHSRDEEC…DVLLRFIGDQ (108 aa). Disordered stretches follow at residues 1262–1292, 1326–1361, 1438–1500, and 1520–1725; these read RNST…VKCR, RQPA…LSED, IQSQ…SPVS, and SSSS…RAKR. Over residues 1266–1278 the composition is skewed to acidic residues; sequence DAEEDTEIVDLDS. Residues 1300-1430 form the Bromo 2 domain; it reads CNPDAWKKQC…ALFESHIKNI (131 aa). The segment covering 1441 to 1453 has biased composition (basic residues); the sequence is QKRRRPRYRKRLR. Low complexity predominate over residues 1454-1468; the sequence is SSSSSLSSSGAPSPK. Positions 1479 to 1499 are enriched in polar residues; the sequence is KNDQNTSVSHARTSSPFSSPV. The span at 1520 to 1533 shows a compositional bias: low complexity; that stretch reads SSSSFGGYSRSGNS. A phosphoserine mark is found at Ser-1577 and Ser-1579. Positions 1587 to 1600 are enriched in basic and acidic residues; sequence GEDKEKKETKEKSH. The span at 1601–1626 shows a compositional bias: low complexity; sequence LSTSESGELGSSLSSESTCGSDSDSE. The segment covering 1627 to 1643 has biased composition (basic and acidic residues); sequence STSRTDQDYVDGDHDYS. Composition is skewed to basic residues over residues 1649 to 1666 and 1684 to 1697; these read RPKR…RNWK and RGGR…RGSR. Residue Ser-1763 is modified to Phosphoserine.

In terms of tissue distribution, found in most adult tissues. Down-regulated in a majority of the B-CLL cases examined.

In terms of biological role, plays a role in the regulation of cell morphology and cytoskeletal organization. Required in the control of cell shape. The sequence is that of Bromodomain and WD repeat-containing protein 3 (BRWD3) from Homo sapiens (Human).